A 101-amino-acid chain; its full sequence is Urease subunit beta (101 aa).

The protein belongs to the urease beta subunit family. Heterotrimer of UreA (gamma), UreB (beta) and UreC (alpha) subunits. Three heterotrimers associate to form the active enzyme.

The protein localises to the cytoplasm. It catalyses the reaction urea + 2 H2O + H(+) = hydrogencarbonate + 2 NH4(+). It participates in nitrogen metabolism; urea degradation; CO(2) and NH(3) from urea (urease route): step 1/1. The sequence is that of Urease subunit beta from Cereibacter sphaeroides (strain ATCC 17025 / ATH 2.4.3) (Rhodobacter sphaeroides).